Consider the following 232-residue polypeptide: Nucleoside diphosphate kinase 2, chloroplastic (232 aa).

A chloroplast-targeting transit peptide spans 1–79 (MGCLSVVGAS…TRIFLPHLVA (79 aa)). 6 residues coordinate ATP: Lys92, Phe140, Arg168, Thr174, Arg185, and Asn195. His198 functions as the Pros-phosphohistidine intermediate in the catalytic mechanism.

The protein belongs to the NDK family. Mg(2+) serves as cofactor.

The protein localises to the plastid. It is found in the chloroplast. The catalysed reaction is a 2'-deoxyribonucleoside 5'-diphosphate + ATP = a 2'-deoxyribonucleoside 5'-triphosphate + ADP. It carries out the reaction a ribonucleoside 5'-diphosphate + ATP = a ribonucleoside 5'-triphosphate + ADP. In terms of biological role, major role in the synthesis of nucleoside triphosphates other than ATP. The ATP gamma phosphate is transferred to the NDP beta phosphate via a ping-pong mechanism, using a phosphorylated active-site intermediate. The protein is Nucleoside diphosphate kinase 2, chloroplastic of Nicotiana tabacum (Common tobacco).